A 124-amino-acid polypeptide reads, in one-letter code: Acidic phospholipase A2 (124 aa).

Intrachain disulfides connect Cys-26–Cys-117, Cys-28–Cys-44, Cys-43–Cys-97, Cys-49–Cys-124, Cys-50–Cys-90, Cys-57–Cys-83, and Cys-77–Cys-88. The Ca(2+) site is built by Tyr-27, Gly-29, and Gly-31. The active site involves His-47. A Ca(2+)-binding site is contributed by Asp-48. Glu-89 is a catalytic residue.

This sequence belongs to the phospholipase A2 family. Group II subfamily. D49 sub-subfamily. Ca(2+) serves as cofactor. As to expression, expressed by the venom gland.

It is found in the secreted. The enzyme catalyses a 1,2-diacyl-sn-glycero-3-phosphocholine + H2O = a 1-acyl-sn-glycero-3-phosphocholine + a fatty acid + H(+). Functionally, snake venom phospholipase A2 (PLA2) that inhibits collagen- and ADP-induced platelet aggregation. PLA2 catalyzes the calcium-dependent hydrolysis of the 2-acyl groups in 3-sn-phosphoglycerides. The sequence is that of Acidic phospholipase A2 from Bothrops jararaca (Jararaca).